Reading from the N-terminus, the 258-residue chain is (7aS)-7a-methyl-1,5-dioxo-2,3,5,6,7,7a-hexahydro-1H-indene-carboxyl-CoA hydrolase (258 aa).

It belongs to the enoyl-CoA hydratase/isomerase family.

It catalyses the reaction (7aS)-7a-methyl-1,5-dioxo-2,3,5,6,7,7a-hexahydro-1H-indene-carboxyl-CoA + H2O = (3E)-2-(2-carboxylatoethyl)-3-methyl-6-oxocyclohex-1-ene-1-carboxyl-CoA + H(+). The protein operates within steroid metabolism; cholesterol degradation. In terms of biological role, involved in the final steps of cholesterol and steroid degradation. Catalyzes the hydrolytic ring D opening of (7aS)-7a-methyl-1,5-dioxo-2,3,5,6,7,7a-hexahydro-1H-indene-carboxyl-CoA (HIEC-CoA) to (3E)-2-(2-carboxylatoethyl)-3-methyl-6-oxocyclohex-1-ene-1-carboxyl-CoA (COCHEA-CoA). This chain is (7aS)-7a-methyl-1,5-dioxo-2,3,5,6,7,7a-hexahydro-1H-indene-carboxyl-CoA hydrolase, found in Rhodococcus jostii (strain RHA1).